The sequence spans 155 residues: Ribosomal RNA large subunit methyltransferase H (155 aa).

S-adenosyl-L-methionine is bound by residues Leu-73, Gly-104, and 123-128 (LSPLTL).

This sequence belongs to the RNA methyltransferase RlmH family. As to quaternary structure, homodimer.

It is found in the cytoplasm. It catalyses the reaction pseudouridine(1915) in 23S rRNA + S-adenosyl-L-methionine = N(3)-methylpseudouridine(1915) in 23S rRNA + S-adenosyl-L-homocysteine + H(+). Its function is as follows. Specifically methylates the pseudouridine at position 1915 (m3Psi1915) in 23S rRNA. The protein is Ribosomal RNA large subunit methyltransferase H of Azotobacter vinelandii (strain DJ / ATCC BAA-1303).